Consider the following 403-residue polypeptide: MDDRNEIPQDGPASMEPEGVIESTWHEVYDNFDDMNLREELLRGIYGYGFEKPSAIQQRAIIPCVRGRDVIAQAQSGTGKTATFSIAILQQIDTSIRECQALILAPTRELATQIQRVVMALGEYMKVHSHACIGGTNVREDARILESGCHVVVGTPGRVYDMINRKVLRTQYIKLFVLDEADEMLSRGFKDQIQDVFKMLPPDVQVILLSATMPPDVLEVSRCFMRDPVSILVKKEELTLEGIKQFYVNVKQENWKLGTLCDLYDTLSITQSVIFCNTRRKVDQLTQEMSIHNFTVSAMHGDMEQRDREVIMKQFRSGSSRVLITTDLLARGIDVQQVSLVINYDLPSNRENYIHRIGRGGRFGRKGVAINFITDDDRRILKDIEQFYHTTIEEMPANIADLI.

Positions 1–20 are disordered; that stretch reads MDDRNEIPQDGPASMEPEGV. The Q motif signature appears at 30–58; the sequence is DNFDDMNLREELLRGIYGYGFEKPSAIQQ. Positions 61–231 constitute a Helicase ATP-binding domain; that stretch reads IIPCVRGRDV…RCFMRDPVSI (171 aa). 74–81 serves as a coordination point for ATP; the sequence is AQSGTGKT. The short motif at 179–182 is the DEAD box element; the sequence is DEAD. Residues 242-403 enclose the Helicase C-terminal domain; sequence GIKQFYVNVK…EMPANIADLI (162 aa).

The protein belongs to the DEAD box helicase family. eIF4A subfamily. As to quaternary structure, eIF4F is a multi-subunit complex, the composition of which varies with external and internal environmental conditions. It is composed of at least eIF4A, eIF4E1 and eIF4G1. Interacts with tud and vas. Interacts (via multiple contacts) with bam; the interaction is direct.

The protein localises to the cytoplasm. It localises to the cytoplasmic ribonucleoprotein granule. The enzyme catalyses ATP + H2O = ADP + phosphate + H(+). ATP-dependent RNA helicase which is a subunit of the eIF4F complex involved in cap recognition and is required for mRNA binding to ribosome. In the current model of translation initiation, eIF4A unwinds RNA secondary structures in the 5'-UTR of mRNAs which is necessary to allow efficient binding of the small ribosomal subunit, and subsequent scanning for the initiator codon. As a result, promotes cell proliferation and growth. Binds and antagonises the bam-bgcn complex; probably prevents bam mediated translational repression of shg/E-cadherin. Involved in germ cell formation. Involved in germline stem cell maintenance and proliferation; prevents differentiation. In Drosophila melanogaster (Fruit fly), this protein is Eukaryotic initiation factor 4A.